Here is a 147-residue protein sequence, read N- to C-terminus: Large ribosomal subunit protein uL13 (147 aa).

The protein belongs to the universal ribosomal protein uL13 family. In terms of assembly, part of the 50S ribosomal subunit.

In terms of biological role, this protein is one of the early assembly proteins of the 50S ribosomal subunit, although it is not seen to bind rRNA by itself. It is important during the early stages of 50S assembly. The sequence is that of Large ribosomal subunit protein uL13 from Mycolicibacterium gilvum (strain PYR-GCK) (Mycobacterium gilvum (strain PYR-GCK)).